The primary structure comprises 321 residues: MNVSVKSLRGVSRTWRSFSSRQGMNVFDRSMKRRQKDWASSLLDSSKYDYLREEVGSRVADRVYDVARTFPLALDVGCGRSHIAEHLSKEVVERLFLTDISSSSLRNRKTSDIPAQCVMADEEFLPFKENTFDLVLSSLSMHWINDLPGALRQIHQVLKPDGVFIGAMVGGETLYELRCSLQLAELEREGGFAPHISPYTAVTDLGNLLGQAGFNMLTVDIDEVQVNYPGMLEVMRDLQGMGESNCAWNRKLLLQRDTMLAAAAIYKEMYGNEDGSVPATFQILYMIGWKPHDSQAKPAKRGSANVSFADLSKIGKLQSDQ.

The N-terminal 25 residues, 1–25 (MNVSVKSLRGVSRTWRSFSSRQGMN), are a transit peptide targeting the mitochondrion.

The protein belongs to the methyltransferase superfamily. As to quaternary structure, interacts with NDUFS7.

The protein resides in the mitochondrion inner membrane. Functionally, arginine hydroxylase that mediates hydroxylation of 'Arg-111' of NDUFS7 and is involved in the assembly of mitochondrial NADH:ubiquinone oxidoreductase complex (complex I, MT-ND1) at early stages. May also have methyltransferase activity. This chain is Arginine-hydroxylase NDUFAF5, mitochondrial, found in Danio rerio (Zebrafish).